Reading from the N-terminus, the 464-residue chain is L-cystine uptake protein TcyP (464 aa).

The next 10 membrane-spanning stretches (helical) occupy residues Thr3–Met23, Val34–Pro54, Tyr73–Phe93, Gly107–Ala127, Pro184–Val204, Ile225–Met245, Phe263–Ala283, Ala347–Leu367, Phe371–Gly391, and Phe395–Ile415.

It belongs to the dicarboxylate/amino acid:cation symporter (DAACS) (TC 2.A.23) family.

The protein localises to the membrane. Its function is as follows. Mediates uptake of L-cystine, the oxidized form of L-cysteine. This chain is L-cystine uptake protein TcyP, found in Bacillus cereus (strain ATCC 14579 / DSM 31 / CCUG 7414 / JCM 2152 / NBRC 15305 / NCIMB 9373 / NCTC 2599 / NRRL B-3711).